The following is a 676-amino-acid chain: Hemin receptor (676 aa).

An N-terminal signal peptide occupies residues 1 to 28 (MLRSTSDRFRWSSLSLAIACTLPLATQA). The short motif at 44–51 (DTMVVTAT) is the TonB box element. A TBDR plug domain is found at 56–167 (SSFEAPMMVT…LGGVIAYETV (112 aa)). Residues 178-676 (NSGYRVYSSA…NVKFFVSYQW (499 aa)) form the TBDR beta-barrel domain. Positions 659 to 676 (QGIPQDGRNVKFFVSYQW) match the TonB C-terminal box motif.

It belongs to the TonB-dependent receptor family.

The protein resides in the cell outer membrane. In terms of biological role, this protein is involved in the initial step of iron uptake by binding hemin, an iron chelatin siderophore that allows the bacteria to extract iron from the environment. The sequence is that of Hemin receptor (hmuR) from Yersinia pestis.